We begin with the raw amino-acid sequence, 294 residues long: 4-hydroxy-tetrahydrodipicolinate synthase (294 aa).

Threonine 45 is a pyruvate binding site. Catalysis depends on tyrosine 133, which acts as the Proton donor/acceptor. Lysine 161 functions as the Schiff-base intermediate with substrate in the catalytic mechanism. Isoleucine 203 provides a ligand contact to pyruvate.

Belongs to the DapA family. Homotetramer; dimer of dimers.

Its subcellular location is the cytoplasm. The catalysed reaction is L-aspartate 4-semialdehyde + pyruvate = (2S,4S)-4-hydroxy-2,3,4,5-tetrahydrodipicolinate + H2O + H(+). Its pathway is amino-acid biosynthesis; L-lysine biosynthesis via DAP pathway; (S)-tetrahydrodipicolinate from L-aspartate: step 3/4. In terms of biological role, catalyzes the condensation of (S)-aspartate-beta-semialdehyde [(S)-ASA] and pyruvate to 4-hydroxy-tetrahydrodipicolinate (HTPA). The polypeptide is 4-hydroxy-tetrahydrodipicolinate synthase (Shewanella sp. (strain MR-4)).